The chain runs to 328 residues: Biotin synthase (328 aa).

In terms of domain architecture, Radical SAM core spans 48–275 (NRIQLSKLLN…KSHVRLTAGR (228 aa)). [4Fe-4S] cluster contacts are provided by C63, C67, and C70. [2Fe-2S] cluster-binding residues include C107, C138, C198, and R270.

Belongs to the radical SAM superfamily. Biotin synthase family. In terms of assembly, homodimer. It depends on [4Fe-4S] cluster as a cofactor. [2Fe-2S] cluster serves as cofactor.

It carries out the reaction (4R,5S)-dethiobiotin + (sulfur carrier)-SH + 2 reduced [2Fe-2S]-[ferredoxin] + 2 S-adenosyl-L-methionine = (sulfur carrier)-H + biotin + 2 5'-deoxyadenosine + 2 L-methionine + 2 oxidized [2Fe-2S]-[ferredoxin]. The protein operates within cofactor biosynthesis; biotin biosynthesis; biotin from 7,8-diaminononanoate: step 2/2. Catalyzes the conversion of dethiobiotin (DTB) to biotin by the insertion of a sulfur atom into dethiobiotin via a radical-based mechanism. The sequence is that of Biotin synthase from Brucella ovis (strain ATCC 25840 / 63/290 / NCTC 10512).